Consider the following 131-residue polypeptide: Profilin-3 (131 aa).

This sequence belongs to the profilin family. In terms of assembly, occurs in many kinds of cells as a complex with monomeric actin in a 1:1 ratio.

Its subcellular location is the cytoplasm. It is found in the cytoskeleton. Binds to actin and affects the structure of the cytoskeleton. At high concentrations, profilin prevents the polymerization of actin, whereas it enhances it at low concentrations. By binding to PIP2, it inhibits the formation of IP3 and DG. This is Profilin-3 from Hevea brasiliensis (Para rubber tree).